Here is an 834-residue protein sequence, read N- to C-terminus: Periplasmic nitrate reductase (834 aa).

A signal peptide (tat-type signal) is located at residues 1–29 (MNLTRREFAKANAAAIAAAAAGLPILVRA). The 57-residue stretch at 41-97 (LVWNKAPCRFCGTGCSVMVATRDGQVVATHGDIKAEVNRGINCVKGYFLSKIMYGSD) folds into the 4Fe-4S Mo/W bis-MGD-type domain. [4Fe-4S] cluster is bound by residues C48, C51, C55, and C83. Residues K85, Q152, N177, C181, 214 to 221 (WGSNMAEM), 245 to 249 (STFEH), 264 to 266 (QTD), M375, Q379, N485, 511 to 512 (SD), K534, D561, and 721 to 730 (TGRVLEHWHT) contribute to the Mo-bis(molybdopterin guanine dinucleotide) site. F797 is a binding site for substrate. Mo-bis(molybdopterin guanine dinucleotide)-binding residues include N805 and K822.

Belongs to the prokaryotic molybdopterin-containing oxidoreductase family. NasA/NapA/NarB subfamily. In terms of assembly, component of the periplasmic nitrate reductase NapAB complex composed of NapA and NapB. [4Fe-4S] cluster is required as a cofactor. The cofactor is Mo-bis(molybdopterin guanine dinucleotide). In terms of processing, predicted to be exported by the Tat system. The position of the signal peptide cleavage has not been experimentally proven.

The protein resides in the periplasm. The catalysed reaction is 2 Fe(II)-[cytochrome] + nitrate + 2 H(+) = 2 Fe(III)-[cytochrome] + nitrite + H2O. Functionally, catalytic subunit of the periplasmic nitrate reductase complex NapAB. Receives electrons from NapB and catalyzes the reduction of nitrate to nitrite. The chain is Periplasmic nitrate reductase from Pseudomonas aeruginosa (strain LESB58).